A 247-amino-acid polypeptide reads, in one-letter code: tRNA pseudouridine synthase A (247 aa).

The Nucleophile role is filled by Asp53. Tyr112 serves as a coordination point for substrate.

The protein belongs to the tRNA pseudouridine synthase TruA family. As to quaternary structure, homodimer.

The enzyme catalyses uridine(38/39/40) in tRNA = pseudouridine(38/39/40) in tRNA. Its function is as follows. Formation of pseudouridine at positions 38, 39 and 40 in the anticodon stem and loop of transfer RNAs. The chain is tRNA pseudouridine synthase A from Anaplasma marginale (strain St. Maries).